A 592-amino-acid chain; its full sequence is V-type ATP synthase alpha chain 2 (592 aa).

An ATP-binding site is contributed by 237–244 (GGFGTGKT).

It belongs to the ATPase alpha/beta chains family.

The enzyme catalyses ATP + H2O + 4 H(+)(in) = ADP + phosphate + 5 H(+)(out). Its function is as follows. Produces ATP from ADP in the presence of a proton gradient across the membrane. The V-type alpha chain is a catalytic subunit. In Clostridium tetani (strain Massachusetts / E88), this protein is V-type ATP synthase alpha chain 2.